Consider the following 89-residue polypeptide: Dynein light chain 1, cytoplasmic (89 aa).

This sequence belongs to the dynein light chain family. As to quaternary structure, interacts with spn-F. Forms ternary complexes with spn-F and IKKepsilon. In terms of tissue distribution, ubiquitous.

The protein localises to the cytoplasm. Its subcellular location is the cytoskeleton. In terms of biological role, acts as a non-catalytic accessory component of a dynein complex. This is Dynein light chain 1, cytoplasmic (ctp) from Drosophila melanogaster (Fruit fly).